We begin with the raw amino-acid sequence, 318 residues long: Ornithine carbamoyltransferase (318 aa).

Residues 63–66 (STRT), glutamine 90, arginine 114, and 141–144 (HPCQ) contribute to the carbamoyl phosphate site. Residues asparagine 172, aspartate 235, and 239–240 (SM) each bind L-ornithine. Carbamoyl phosphate is bound by residues 275-276 (CL) and arginine 303.

Belongs to the aspartate/ornithine carbamoyltransferase superfamily. OTCase family.

The protein localises to the cytoplasm. The catalysed reaction is carbamoyl phosphate + L-ornithine = L-citrulline + phosphate + H(+). It participates in amino-acid biosynthesis; L-arginine biosynthesis; L-arginine from L-ornithine and carbamoyl phosphate: step 1/3. In terms of biological role, reversibly catalyzes the transfer of the carbamoyl group from carbamoyl phosphate (CP) to the N(epsilon) atom of ornithine (ORN) to produce L-citrulline. This Prochlorococcus marinus (strain SARG / CCMP1375 / SS120) protein is Ornithine carbamoyltransferase.